The chain runs to 165 residues: Cyclic pyranopterin monophosphate synthase (165 aa).

Residues 75–77 (MCH) and 115–116 (ME) each bind substrate. D130 is a catalytic residue.

It belongs to the MoaC family. Homohexamer; trimer of dimers.

It carries out the reaction (8S)-3',8-cyclo-7,8-dihydroguanosine 5'-triphosphate = cyclic pyranopterin phosphate + diphosphate. It functions in the pathway cofactor biosynthesis; molybdopterin biosynthesis. Its function is as follows. Catalyzes the conversion of (8S)-3',8-cyclo-7,8-dihydroguanosine 5'-triphosphate to cyclic pyranopterin monophosphate (cPMP). In Halalkalibacterium halodurans (strain ATCC BAA-125 / DSM 18197 / FERM 7344 / JCM 9153 / C-125) (Bacillus halodurans), this protein is Cyclic pyranopterin monophosphate synthase.